We begin with the raw amino-acid sequence, 701 residues long: Low-density lipoprotein receptor-related protein 12 (701 aa).

The Extracellular segment spans residues Gly-1–Arg-334. 2 LDL-receptor class A domains span residues Asn-7–Ala-43 and Pro-56–Asp-97. 7 disulfide bridges follow: Cys-8-Cys-20, Cys-15-Cys-33, Cys-27-Cys-42, Cys-57-Cys-74, Cys-64-Cys-87, Cys-81-Cys-96, and Cys-101-Cys-127. The CUB domain occupies Cys-101–Asp-214. Residues Asn-126 and Asn-208 are each glycosylated (N-linked (GlcNAc...) asparagine). 3 LDL-receptor class A domains span residues Phe-216–Thr-253, Met-254–Phe-291, and Phe-292–Pro-328. 9 disulfides stabilise this stretch: Cys-217–Cys-230, Cys-224–Cys-243, Cys-237–Cys-252, Cys-255–Cys-268, Cys-262–Cys-281, Cys-275–Cys-290, Cys-293–Cys-305, Cys-300–Cys-318, and Cys-312–Cys-327. A glycan (N-linked (GlcNAc...) asparagine) is linked at Asn-251. Asn-283 carries N-linked (GlcNAc...) asparagine glycosylation. The chain crosses the membrane as a helical span at residues Val-335 to Gly-355. Over Cys-356–Cys-701 the chain is Cytoplasmic. 4 disordered regions span residues Ala-465 to Lys-520, Ala-535 to Arg-565, Ser-590 to Asp-612, and Asp-643 to Asp-665. 2 stretches are compositionally biased toward polar residues: residues Ser-590–Leu-599 and Asp-643–Asn-656.

It belongs to the LDLR family. In terms of assembly, may interact with RACK1, ZFYVE9 and NMRK2.

The protein localises to the membrane. The protein resides in the coated pit. Its function is as follows. Probable receptor, which may be involved in the internalization of lipophilic molecules and/or signal transduction. May act as a tumor suppressor. The chain is Low-density lipoprotein receptor-related protein 12 (LRP12) from Macaca fascicularis (Crab-eating macaque).